The chain runs to 277 residues: Large ribosomal subunit protein uL2 (277 aa).

The disordered stretch occupies residues 223–261 (SVMNPNDHPHGGGEGKSPVGRPSPVTPWGKPALGYKTRK).

The protein belongs to the universal ribosomal protein uL2 family. As to quaternary structure, part of the 50S ribosomal subunit. Forms a bridge to the 30S subunit in the 70S ribosome.

Functionally, one of the primary rRNA binding proteins. Required for association of the 30S and 50S subunits to form the 70S ribosome, for tRNA binding and peptide bond formation. It has been suggested to have peptidyltransferase activity; this is somewhat controversial. Makes several contacts with the 16S rRNA in the 70S ribosome. The sequence is that of Large ribosomal subunit protein uL2 from Clostridium botulinum (strain Alaska E43 / Type E3).